We begin with the raw amino-acid sequence, 142 residues long: Large ribosomal subunit protein uL13 (142 aa).

Belongs to the universal ribosomal protein uL13 family. Part of the 50S ribosomal subunit.

This protein is one of the early assembly proteins of the 50S ribosomal subunit, although it is not seen to bind rRNA by itself. It is important during the early stages of 50S assembly. This Coxiella burnetii (strain CbuG_Q212) (Coxiella burnetii (strain Q212)) protein is Large ribosomal subunit protein uL13.